The chain runs to 271 residues: ATP synthase subunit a (271 aa).

5 helical membrane passes run F38–V58, L100–L120, D146–I166, L220–P240, and A242–V262.

This sequence belongs to the ATPase A chain family. In terms of assembly, F-type ATPases have 2 components, CF(1) - the catalytic core - and CF(0) - the membrane proton channel. CF(1) has five subunits: alpha(3), beta(3), gamma(1), delta(1), epsilon(1). CF(0) has three main subunits: a(1), b(2) and c(9-12). The alpha and beta chains form an alternating ring which encloses part of the gamma chain. CF(1) is attached to CF(0) by a central stalk formed by the gamma and epsilon chains, while a peripheral stalk is formed by the delta and b chains.

Its subcellular location is the cell inner membrane. In terms of biological role, key component of the proton channel; it plays a direct role in the translocation of protons across the membrane. The protein is ATP synthase subunit a of Salmonella arizonae (strain ATCC BAA-731 / CDC346-86 / RSK2980).